Reading from the N-terminus, the 139-residue chain is Nucleoside diphosphate kinase (139 aa).

ATP-binding residues include Lys-10, Phe-58, Arg-86, Thr-92, Arg-103, and Asn-113. His-116 functions as the Pros-phosphohistidine intermediate in the catalytic mechanism.

It belongs to the NDK family. Homotetramer. Mg(2+) serves as cofactor.

It localises to the cytoplasm. It catalyses the reaction a 2'-deoxyribonucleoside 5'-diphosphate + ATP = a 2'-deoxyribonucleoside 5'-triphosphate + ADP. The catalysed reaction is a ribonucleoside 5'-diphosphate + ATP = a ribonucleoside 5'-triphosphate + ADP. Major role in the synthesis of nucleoside triphosphates other than ATP. The ATP gamma phosphate is transferred to the NDP beta phosphate via a ping-pong mechanism, using a phosphorylated active-site intermediate. This Nitratidesulfovibrio vulgaris (strain DSM 19637 / Miyazaki F) (Desulfovibrio vulgaris) protein is Nucleoside diphosphate kinase.